We begin with the raw amino-acid sequence, 236 residues long: tRNA (guanine-N(7)-)-methyltransferase (236 aa).

S-adenosyl-L-methionine-binding positions include Gly-54, 77–78 (EI), 110–111 (NA), and Leu-130. The active site involves Asp-133. Position 208 to 210 (208 to 210 (TEE)) interacts with S-adenosyl-L-methionine.

Belongs to the class I-like SAM-binding methyltransferase superfamily. TrmB family.

It is found in the nucleus. It carries out the reaction guanosine(46) in tRNA + S-adenosyl-L-methionine = N(7)-methylguanosine(46) in tRNA + S-adenosyl-L-homocysteine. It participates in tRNA modification; N(7)-methylguanine-tRNA biosynthesis. In terms of biological role, catalyzes the formation of N(7)-methylguanine at position 46 (m7G46) in tRNA. This Bombyx mori (Silk moth) protein is tRNA (guanine-N(7)-)-methyltransferase.